The following is a 553-amino-acid chain: Salicylyl-CoA synthase / salicylate adenylyltransferase (553 aa).

G203 is a binding site for ATP. Residue 246–247 (HN) participates in substrate binding. Positions 320, 342, 426, 441, and 533 each coordinate ATP. K533 lines the substrate pocket.

Belongs to the ATP-dependent AMP-binding enzyme family.

The enzyme catalyses salicylate + ATP + CoA = 2-hydroxybenzoyl-CoA + AMP + diphosphate. Involved in the degradation of salicylate via a pathway involving coenzyme A derivative. Catalyzes the conversion of salicylate to salicyloyl-CoA via the formation of a salicylate-adenylate intermediate. The substrate specificity is strong, since benzoate, 3-hydroxybenzoate, 4-hydroxybenzoate, gentisate, 2-aminobenzoate, aminobenzoate, salicylamide, salicylaldoxime and 2-hydroxyphenyl acetate cannot substitute for salicylate. This Streptomyces sp protein is Salicylyl-CoA synthase / salicylate adenylyltransferase.